The chain runs to 319 residues: Tetrahydromethanopterin S-methyltransferase subunit H (319 aa).

Belongs to the MtrH family. In terms of assembly, the complex is composed of 8 subunits; MtrA, MtrB, MtrC, MtrD, MtrE, MtrF, MtrG and MtrH.

The enzyme catalyses 5-methyl-5,6,7,8-tetrahydromethanopterin + coenzyme M + 2 Na(+)(in) = 5,6,7,8-tetrahydromethanopterin + methyl-coenzyme M + 2 Na(+)(out). Its pathway is one-carbon metabolism; methanogenesis from CO(2); methyl-coenzyme M from 5,10-methylene-5,6,7,8-tetrahydromethanopterin: step 2/2. In terms of biological role, part of a complex that catalyzes the formation of methyl-coenzyme M and tetrahydromethanopterin from coenzyme M and methyl-tetrahydromethanopterin. This is an energy-conserving, sodium-ion translocating step. MtrH catalyzes the transfer of the methyl group from methyl-tetrahydromethanopterin to the corrinoid prosthetic group of MtrA. The protein is Tetrahydromethanopterin S-methyltransferase subunit H of Methanocaldococcus jannaschii (strain ATCC 43067 / DSM 2661 / JAL-1 / JCM 10045 / NBRC 100440) (Methanococcus jannaschii).